The primary structure comprises 179 residues: Ribosome maturation factor RimP (179 aa).

Belongs to the RimP family.

It is found in the cytoplasm. Its function is as follows. Required for maturation of 30S ribosomal subunits. This chain is Ribosome maturation factor RimP, found in Prosthecochloris aestuarii (strain DSM 271 / SK 413).